The chain runs to 169 residues: Regulator of sigma D (169 aa).

The protein belongs to the Rsd/AlgQ family. As to quaternary structure, interacts with RpoD.

It localises to the cytoplasm. In terms of biological role, binds RpoD and negatively regulates RpoD-mediated transcription activation by preventing the interaction between the primary sigma factor RpoD with the catalytic core of the RNA polymerase and with promoter DNA. May be involved in replacement of the RNA polymerase sigma subunit from RpoD to RpoS during the transition from exponential growth to the stationary phase. The sequence is that of Regulator of sigma D from Yersinia pseudotuberculosis serotype O:1b (strain IP 31758).